The primary structure comprises 499 residues: 2-isopropylmalate synthase (499 aa).

The Pyruvate carboxyltransferase domain maps to 5–267; the sequence is IKIFDTTLRD…ETGINLGEIA (263 aa). Mn(2+) is bound by residues Asp-14, His-202, His-204, and Asn-238. Positions 391 to 499 are regulatory domain; sequence SVEVLHVISG…YLSALNRIRR (109 aa).

This sequence belongs to the alpha-IPM synthase/homocitrate synthase family. LeuA type 1 subfamily. Requires Mn(2+) as cofactor.

It localises to the cytoplasm. It carries out the reaction 3-methyl-2-oxobutanoate + acetyl-CoA + H2O = (2S)-2-isopropylmalate + CoA + H(+). It participates in amino-acid biosynthesis; L-leucine biosynthesis; L-leucine from 3-methyl-2-oxobutanoate: step 1/4. In terms of biological role, catalyzes the condensation of the acetyl group of acetyl-CoA with 3-methyl-2-oxobutanoate (2-ketoisovalerate) to form 3-carboxy-3-hydroxy-4-methylpentanoate (2-isopropylmalate). This is 2-isopropylmalate synthase from Pyrococcus furiosus (strain ATCC 43587 / DSM 3638 / JCM 8422 / Vc1).